Reading from the N-terminus, the 164-residue chain is uncharacterized protein (164 aa).

A helical membrane pass occupies residues 46 to 66; sequence FIRPNIYLIIFIIIVLLLLYY. The stretch at 72–137 forms a coiled coil; sequence KADKEKEKLE…YNLNKENLRE (66 aa). Residues 76–91 show a composition bias toward basic and acidic residues; it reads EKEKLEDTDKEFDKST. The disordered stretch occupies residues 76 to 114; sequence EKEKLEDTDKEFDKSTNNDTNSKKIYHRQKNSKTLNSSK.

The protein resides in the membrane. This is an uncharacterized protein from Acanthamoeba polyphaga mimivirus (APMV).